A 37-amino-acid polypeptide reads, in one-letter code: Cytochrome b6-f complex subunit 5 (37 aa).

Residues 5-25 (LLSGIILGLIPITICGLFFTA) traverse the membrane as a helical segment.

Belongs to the PetG family. As to quaternary structure, the 4 large subunits of the cytochrome b6-f complex are cytochrome b6, subunit IV (17 kDa polypeptide, PetD), cytochrome f and the Rieske protein, while the 4 small subunits are PetG, PetL, PetM and PetN. The complex functions as a dimer.

It localises to the plastid. The protein resides in the chloroplast thylakoid membrane. Its function is as follows. Component of the cytochrome b6-f complex, which mediates electron transfer between photosystem II (PSII) and photosystem I (PSI), cyclic electron flow around PSI, and state transitions. PetG is required for either the stability or assembly of the cytochrome b6-f complex. In Euglena gracilis, this protein is Cytochrome b6-f complex subunit 5.